Here is a 292-residue protein sequence, read N- to C-terminus: NAD kinase (292 aa).

Asp73 functions as the Proton acceptor in the catalytic mechanism. NAD(+) is bound by residues 73–74 (DG), 147–148 (NE), His158, Arg175, Asp177, 188–193 (TAYSLS), and Gln247.

It belongs to the NAD kinase family. A divalent metal cation serves as cofactor.

The protein resides in the cytoplasm. It carries out the reaction NAD(+) + ATP = ADP + NADP(+) + H(+). Functionally, involved in the regulation of the intracellular balance of NAD and NADP, and is a key enzyme in the biosynthesis of NADP. Catalyzes specifically the phosphorylation on 2'-hydroxyl of the adenosine moiety of NAD to yield NADP. This chain is NAD kinase, found in Enterobacter sp. (strain 638).